The chain runs to 93 residues: MLCSIYKSSKKEGTYLYIPKKDDFSQVPDTLMQMFGKPSHVMTVNLEGRSLALVNIEKVKESLNNEGFFLQLPPPPENLLQQHKERKAQQKND.

Residues 1 to 84 (MLCSIYKSSK…PPENLLQQHK (84 aa)) enclose the YcgL domain. A disordered region spans residues 72 to 93 (LPPPPENLLQQHKERKAQQKND).

The sequence is that of YcgL domain-containing protein VV1_0131 from Vibrio vulnificus (strain CMCP6).